We begin with the raw amino-acid sequence, 100 residues long: Nucleoid-associated protein jhp_0031 (100 aa).

This sequence belongs to the YbaB/EbfC family. In terms of assembly, homodimer.

The protein localises to the cytoplasm. It is found in the nucleoid. Its function is as follows. Binds to DNA and alters its conformation. May be involved in regulation of gene expression, nucleoid organization and DNA protection. The protein is Nucleoid-associated protein jhp_0031 of Helicobacter pylori (strain J99 / ATCC 700824) (Campylobacter pylori J99).